We begin with the raw amino-acid sequence, 3013 residues long: Genome polyprotein (3013 aa).

An N-acetylserine; by host modification is found at S2. The segment at S2–K23 is interaction with STAT1. Residues S2–P58 are interaction with EIF2AK2/PKR. An interaction with DDX3X region spans residues S2 to R59. A disordered region spans residues S2–T75. The Cytoplasmic portion of the chain corresponds to S2–N168. 2 consecutive short sequence motifs (nuclear localization signal) follow at residues P5–R13 and P38–R43. The span at P7–N16 shows a compositional bias: basic residues. Residues G32–R47 show a composition bias toward low complexity. S53 carries the phosphoserine; by host modification. 2 consecutive short sequence motifs (nuclear localization signal) follow at residues P58–P64 and P66–Q71. Residues P58 to T72 show a composition bias toward basic residues. A phosphoserine; by host mark is found at S99 and S116. Positions P112–A152 are important for endoplasmic reticulum and mitochondrial localization. An interaction with APOA2 region spans residues V122–S173. Positions Y164–G167 are important for lipid droplets localization. A helical membrane pass occupies residues L169–A189. The propeptide at L178–A191 is ER anchor for the core protein, removed in mature form by host signal peptidase. The Lumenal segment spans residues S190–G358. 4 N-linked (GlcNAc...) asparagine; by host glycosylation sites follow: N196, N209, N234, and N250. An important for fusion region spans residues M265–R296. A glycan (N-linked (GlcNAc...) asparagine; by host) is linked at N305. Residues I359–A379 form a helical membrane-spanning segment. Topologically, residues G380–L723 are lumenal. Positions T385 to H412 are HVR1. N-linked (GlcNAc...) (high mannose) asparagine; by host glycans are attached at residues N417, N423, and N430. 4 cysteine pairs are disulfide-bonded: C429-C553, C452-C459, C487-C495, and C504-C509. N448 carries N-linked (GlcNAc...) asparagine; by host glycosylation. Residues A475–G479 form an HVR2 region. N476 carries N-linked (GlcNAc...) asparagine; by host glycosylation. The CD81-binding 1 stretch occupies residues S481–P494. N533 carries an N-linked (GlcNAc...) asparagine; by host glycan. The tract at residues P545 to G552 is CD81-binding 2. N557 carries N-linked (GlcNAc...) asparagine; by host glycosylation. Intrachain disulfides connect C565–C570, C579–C583, C595–C618, and C605–C642. Residues N621 and N643 are each glycosylated (N-linked (GlcNAc...) (high mannose) asparagine; by host). An intrachain disulfide couples C650 to C675. A PKR/eIF2-alpha phosphorylation homology domain (PePHD) region spans residues I658–E669. A helical membrane pass occupies residues L724 to A744. Over A745–A755 the chain is Lumenal. A helical membrane pass occupies residues S756–I776. The Cytoplasmic segment spans residues K777–V780. The chain crosses the membrane as a helical span at residues V781–L801. Topologically, residues P802–E811 are lumenal. The chain crosses the membrane as a helical span at residues Q812 to A832. Residues Y833–H879 are Cytoplasmic-facing. A helical membrane pass occupies residues P880 to L900. Residues Q901–V926 lie on the Lumenal side of the membrane. Positions Q901–L1024 constitute a Peptidase C18 domain. Residues V902–R1204 form a protease NS2-3 region. C920 carries the S-palmitoyl cysteine; by host lipid modification. A helical membrane pass occupies residues A927 to I947. The segment at A927–I947 is interaction with host SCPS1. Residues Y948–T1655 lie on the Cytoplasmic side of the membrane. Catalysis depends on for protease NS2 activity; shared with dimeric partner residues H950, E970, and C991. Positions A1025–P1206 constitute a Peptidase S29 domain. Residues H1081 and D1105 each act as charge relay system; for serine protease NS3 activity in the active site. Zn(2+) contacts are provided by C1121 and C1123. S1163 functions as the Charge relay system; for serine protease NS3 activity in the catalytic mechanism. 2 residues coordinate Zn(2+): C1169 and H1173. The Helicase ATP-binding domain occupies P1215–S1367. Position 1228–1235 (A1228–S1235) interacts with ATP. Positions 1235 and 1315 each coordinate Mg(2+). Positions D1314–H1317 match the DECH box motif. The Helicase C-terminal domain occupies Y1374–R1536. Positions Q1484–V1496 are RNA-binding. A helical membrane pass occupies residues S1656–G1676. The interval S1677 to G1688 is NS3-binding. Topologically, residues S1677–T1803 are cytoplasmic. Residues T1804 to S1824 form a helical membrane-spanning segment. At T1825–A1826 the chain is on the lumenal side. Residues F1827 to I1847 traverse the membrane as a helical segment. D1848 is a topological domain (cytoplasmic). The chain crosses the membrane as a helical span at residues I1849–G1869. Residues E1870 to N1879 lie on the Lumenal side of the membrane. Residues L1880–L1900 traverse the membrane as a helical segment. The Cytoplasmic portion of the chain corresponds to R1901 to C1970. C1970 is lipidated: S-palmitoyl cysteine; by host. The stretch at S1971–T2000 is an intramembrane region. Over L2001–R2992 the chain is Cytoplasmic. The Zn(2+) site is built by C2009, C2027, C2029, and C2050. The segment at E2118–A2206 is FKBP8-binding. Residues E2118–V2331 form a transcriptional activation region. Residues P2133 to P2137 are interaction with non-structural protein 4A. Residues R2187 to E2440 form an interaction with host SKP2 region. A phosphoserine; by host mark is found at S2192, S2195, S2199, S2202, S2205, and S2208. An ISDR region spans residues S2208–K2247. An interaction with EIF2AK2/PKR region spans residues S2208–F2273. Residues K2247–Y2305 form an NS4B-binding region. A V3 region spans residues Q2298–P2376. Residues P2316–T2411 form a disordered region. The SH3-binding signature appears at P2321 to P2324. Residues P2326–L2334 carry the Nuclear localization signal motif. The segment covering A2347–M2373 has biased composition (polar residues). Residues P2375–D2385 show a composition bias toward basic and acidic residues. Phosphoserine; by host is present on S2464. A RdRp catalytic domain is found at P2636–D2754. The Mg(2+) site is built by D2642, D2740, and D2741. Residues N2993–R3013 form a helical membrane-spanning segment.

The protein belongs to the hepacivirus polyprotein family. Homooligomer. Interacts with E1 (via C-terminus). Interacts with the non-structural protein 5A. Interacts (via N-terminus) with host STAT1 (via SH2 domain); this interaction results in decreased STAT1 phosphorylation and ubiquitin-mediated proteasome-dependent STAT1 degradation, leading to decreased IFN-stimulated gene transcription. Interacts with host STAT3; this interaction constitutively activates STAT3. Interacts with host LTBR receptor. Interacts with host TNFRSF1A receptor and possibly induces apoptosis. Interacts with host HNRPK. Interacts with host YWHAE. Interacts with host UBE3A/E6AP. Interacts with host DDX3X. Interacts with host APOA2. Interacts with host RXRA protein. Interacts with host SP110 isoform 3/Sp110b; this interaction sequesters the transcriptional corepressor SP110 away from the nucleus. Interacts with host CREB3 nuclear transcription protein; this interaction triggers cell transformation. Interacts with host ACY3. Interacts with host C1QR1. Interacts with host RBM24; this interaction, which enhances the interaction of the mature core protein with 5'-UTR, may inhibit viral translation and favor replication. Interacts with host EIF2AK2/PKR; this interaction induces the autophosphorylation of EIF2AK2. Part of the viral assembly initiation complex composed of NS2, E1, E2, NS3, NS4A, NS5A and the mature core protein. In terms of assembly, forms a heterodimer with envelope glycoprotein E2. Interacts with mature core protein. Interacts with protease NS2. The heterodimer E1/E2 interacts with host CLDN1; this interaction plays a role in viral entry into host cell. Interacts with host SPSB2 (via C-terminus). Part of the viral assembly initiation complex composed of NS2, E1, E2, NS3, NS4A, NS5A and the mature core protein. Interacts with host NEURL3; this interaction prevents E1 binding to glycoprotein E2. As to quaternary structure, forms a heterodimer with envelope glycoprotein E1. Interacts with host CD81 and SCARB1 receptors; these interactions play a role in viral entry into host cell. Interacts with host EIF2AK2/PKR; this interaction inhibits EIF2AK2 and probably allows the virus to evade the innate immune response. Interacts with host CD209/DC-SIGN and CLEC4M/DC-SIGNR. Interact with host SPCS1; this interaction is essential for viral particle assembly. Interacts with protease NS2. The heterodimer E1/E2 interacts with host CLDN1; this interaction plays a role in viral entry into host cell. Part of the viral assembly initiation complex composed of NS2, E1, E2, NS3, NS4A, NS5A and the mature core protein. Interacts with host SLC3A2/4F2hc; the interaction may facilitate viral entry into host cell. Interacts with human PLSCR1. Homohexamer. Homoheptamer. Interacts with protease NS2. In terms of assembly, homodimer. Interacts with host SPCS1; this interaction is essential for viral particle assembly. Interacts with envelope glycoprotein E1. Interacts with envelope glycoprotein E2. Interacts with viroporin p7. Interacts with serine protease/helicase NS3. Part of the replication complex composed of NS2, NS3, NS4A, NS4B, NS5A and the RNA-directed RNA polymerase embedded in an ER-derived membranous web. Part of the viral assembly initiation complex composed of NS2, E1, E2, NS3, NS4A, NS5A and the mature core protein. As to quaternary structure, interacts with protease NS2. Interacts with non-structural protein 4A; this interaction stabilizes the folding of NS3 serine protease. NS3-NS4A interaction is essential for NS3 activation and allows membrane anchorage of the latter. NS3/NS4A complex also prevents phosphorylation of host IRF3, thus preventing the establishment of dsRNA induced antiviral state. Interacts with host MAVS; this interaction leads to the cleavage and inhibition of host MAVS. Interacts with host TICAM1; this interaction leads to the cleavage and inhibition of host TICAM1. Interacts with host TANK-binding kinase/TBK1; this interaction results in the inhibition of the association between TBK1 and IRF3, which leads to the inhibition of IRF3 activation. Interacts with host RBM24. Part of the replication complex composed of NS2, NS3, NS4A, NS4B, NS5A and the RNA-directed RNA polymerase embedded in an ER-derived membranous web. Part of the viral assembly initiation complex composed of NS2, E1, E2, NS3, NS4A, NS5A and the mature core protein. Interacts with NS3 serine protease; this interaction stabilizes the folding of NS3 serine protease. NS3-NS4A interaction is essential for NS3 activation and allows membrane anchorage of the latter. Interacts with non-structural protein 5A (via N-terminus). Part of the replication complex composed of NS2, NS3, NS4A, NS4B, NS5A and the RNA-directed RNA polymerase embedded in an ER-derived membranous web. Part of the viral assembly initiation complex composed of NS2, E1, E2, NS3, NS4A, NS5A and the mature core protein. In terms of assembly, homomultimer. Interacts with non-structural protein NS5A. Interacts with host PLA2G4C; this interaction likely initiates the recruitment of replication complexes to lipid droplets. Interacts with host STING; this interaction disrupts the interaction between STING and TBK1 thereby suppressing the interferon signaling. Part of the replication complex composed of NS2, NS3, NS4A, NS4B, NS5A and the RNA-directed RNA polymerase embedded in an ER-derived membranous web. As to quaternary structure, monomer. Homodimer; dimerization is required for RNA-binding. Interacts with the mature core protein. Interacts (via N-terminus) with non-structural protein 4A. Interacts with non-structural protein 4B. Interacts (via region D2) with RNA-directed RNA polymerase. Part of the viral assembly initiation complex composed of NS2, E1, E2, NS3, NS4A, NS5A and the mature core protein. Part of the replication complex composed of NS2, NS3, NS4A, NS4B, NS5A and the RNA-directed RNA polymerase embedded in an ER-derived membranous web. Interacts with host GRB2. Interacts with host BIN1. Interacts with host PIK3R1. Interacts with host SRCAP. Interacts with host FKBP8. Interacts (via C-terminus) with host VAPB (via MSP domain). Interacts with host EIF2AK2/PKR; this interaction leads to disruption of EIF2AK2 dimerization by NS5A and probably allows the virus to evade the innate immune response. Interacts (via N-terminus) with host PACSIN2 (via N-terminus); this interaction attenuates protein kinase C alpha-mediated phosphorylation of PACSIN2 by disrupting the interaction between PACSIN2 and PRKCA. Interacts (via N-terminus) with host SRC kinase (via SH2 domain). Interacts with most Src-family kinases. Interacts with host IFI27 and SKP2; promotes the ubiquitin-mediated proteasomal degradation of NS5A. Interacts with host GPS2. Interacts with host TNFRSF21; this interaction allows the modulation by the virus of JNK, p38 MAPK, STAT3, and Akt signaling pathways in a DR6-dependent manner. Interacts (via N-terminus) with host CIDEB (via N-terminus); this interaction seems to regulate the association of HCV particles with APOE. Interacts with host CHKA/Choline Kinase-alpha; CHKA bridges host PI4KA and NS5A and potentiates NS5A-stimulated PI4KA activity, which then facilitates the targeting of the ternary complex to the ER for viral replication. Interacts with host SPSB2 (via C-terminus); this interaction targets NS5A for ubiquitination and degradation. Interacts with host RAB18; this interaction may promote the association of NS5A and other replicase components with lipid droplets. Interacts (via region D2) with host PPIA/CYPA; the interaction stimulates RNA-binding ability of NS5A and is dependent on the peptidyl-prolyl cis-trans isomerase activity of PPIA/CYPA. Interacts with host TRIM14; this interaction induces the degradation of NS5A. Homooligomer. Interacts with non-structural protein 5A. Interacts with host VAPB. Interacts with host PRK2/PKN2. Interacts with host HNRNPA1 and SEPT6; these interactions facilitate viral replication. Part of the replication complex composed of NS2, NS3, NS4A, NS4B, NS5A and the RNA-directed RNA polymerase. Zn(2+) serves as cofactor. Requires Mg(2+) as cofactor. In terms of processing, specific enzymatic cleavages in vivo yield mature proteins. The structural proteins, core, E1, E2 and p7 are produced by proteolytic processing by host signal peptidases. The core protein precursor is synthesized as a 23 kDa, which is retained in the ER membrane through the hydrophobic signal peptide. Cleavage by the signal peptidase releases the 21 kDa mature core protein. The cleavage of the core protein precursor occurs between aminoacids 176 and 188 but the exact cleavage site is not known. Some degraded forms of the core protein appear as well during the course of infection. The other proteins (p7, NS2, NS3, NS4A, NS4B, NS5A and NS5B) are cleaved by the viral proteases. Autoprocessing between NS2 and NS3 is mediated by the NS2 cysteine protease catalytic domain and regulated by the NS3 N-terminal domain. Phosphorylated by host PKC and PKA. Post-translationally, ubiquitinated; mediated by UBE3A and leading to core protein subsequent proteasomal degradation. In terms of processing, highly N-glycosylated. Palmitoylation is required for NS2/3 autoprocessing and E2 recruitment to membranes. Post-translationally, palmitoylated. This modification may play a role in its polymerization or in protein-protein interactions. In terms of processing, phosphorylated on serines in a basal form termed p56. p58 is a hyperphosphorylated form of p56. p56 and p58 coexist in the cell in roughly equivalent amounts. Hyperphosphorylation is dependent on the presence of NS4A. Host CSNK1A1/CKI-alpha or RPS6KB1 kinases may be responsible for NS5A phosphorylation. Tyrosine phosphorylation is essential for the interaction with host SRC. Post-translationally, the N-terminus is phosphorylated by host PRK2/PKN2.

The protein resides in the host endoplasmic reticulum membrane. It is found in the host mitochondrion membrane. Its subcellular location is the virion. It localises to the host cytoplasm. The protein localises to the host nucleus. The protein resides in the host lipid droplet. It is found in the virion membrane. Its subcellular location is the host mitochondrion. It localises to the host cell membrane. The protein localises to the host perinuclear region. It carries out the reaction Hydrolysis of four peptide bonds in the viral precursor polyprotein, commonly with Asp or Glu in the P6 position, Cys or Thr in P1 and Ser or Ala in P1'.. The enzyme catalyses a ribonucleoside 5'-triphosphate + H2O = a ribonucleoside 5'-diphosphate + phosphate + H(+). It catalyses the reaction ATP + H2O = ADP + phosphate + H(+). The catalysed reaction is RNA(n) + a ribonucleoside 5'-triphosphate = RNA(n+1) + diphosphate. Inhibited by the antiviral drug hexamethylene amiloride. Inhibition by amantadine appears to be genotype-dependent. Also inhibited by long-alkyl-chain iminosugar derivatives. With respect to regulation, activity is up-regulated by PRK2/PKN2-mediated phosphorylation. In terms of biological role, packages viral RNA to form a viral nucleocapsid, and promotes virion budding. Participates in the viral particle production as a result of its interaction with the non-structural protein 5A. Binds RNA and may function as a RNA chaperone to induce the RNA structural rearrangements taking place during virus replication. Modulates viral translation initiation by interacting with viral IRES and 40S ribosomal subunit. Affects various cell signaling pathways, host immunity and lipid metabolism. Prevents the establishment of cellular antiviral state by blocking the interferon-alpha/beta (IFN-alpha/beta) and IFN-gamma signaling pathways and by blocking the formation of phosphorylated STAT1 and promoting ubiquitin-mediated proteasome-dependent degradation of STAT1. Activates STAT3 leading to cellular transformation. Regulates the activity of cellular genes, including c-myc and c-fos. May repress the promoter of p53, and sequester CREB3 and SP110 isoform 3/Sp110b in the cytoplasm. Represses cell cycle negative regulating factor CDKN1A, thereby interrupting an important check point of normal cell cycle regulation. Targets transcription factors involved in the regulation of inflammatory responses and in the immune response: suppresses TNF-induced NF-kappa-B activation, and activates AP-1. Binds to dendritic cells (DCs) via C1QR1, resulting in down-regulation of T-lymphocytes proliferation. Alters lipid metabolism by interacting with hepatocellular proteins involved in lipid accumulation and storage. Induces up-regulation of FAS promoter activity, and thereby contributes to the increased triglyceride accumulation in hepatocytes (steatosis). Its function is as follows. Forms a heterodimer with envelope glycoprotein E2, which mediates virus attachment to the host cell, virion internalization through clathrin-dependent endocytosis and fusion with host membrane. Fusion with the host cell is most likely mediated by both E1 and E2, through conformational rearrangements of the heterodimer required for fusion rather than a classical class II fusion mechanism. E1/E2 heterodimer binds host apolipoproteins such as APOB and ApoE thereby forming a lipo-viro-particle (LVP). APOE associated to the LVP allows the initial virus attachment to cell surface receptors such as the heparan sulfate proteoglycans (HSPGs), syndecan-1 (SDC1), syndecan-1 (SDC2), the low-density lipoprotein receptor (LDLR) and scavenger receptor class B type I (SCARB1). The cholesterol transfer activity of SCARB1 allows E2 exposure and binding of E2 to SCARB1 and the tetraspanin CD81. E1/E2 heterodimer binding on CD81 activates the epithelial growth factor receptor (EGFR) signaling pathway. Diffusion of the complex E1-E2-EGFR-SCARB1-CD81 to the cell lateral membrane allows further interaction with Claudin 1 (CLDN1) and occludin (OCLN) to finally trigger HCV entry. Functionally, forms a heterodimer with envelope glycoprotein E1, which mediates virus attachment to the host cell, virion internalization through clathrin-dependent endocytosis and fusion with host membrane. Fusion with the host cell is most likely mediated by both E1 and E2, through conformational rearrangements of the heterodimer required for fusion rather than a classical class II fusion mechanism. The interaction between envelope glycoprotein E2 and host apolipoprotein E/APOE allows the proper assembly, maturation and infectivity of the viral particles. This interaction is probably promoted via the up-regulation of cellular autophagy by the virus. E1/E2 heterodimer binds host apolipoproteins such as APOB and APOE thereby forming a lipo-viro-particle (LVP). APOE associated to the LVP allows the initial virus attachment to cell surface receptors such as the heparan sulfate proteoglycans (HSPGs), syndecan-1 (SDC1), syndecan-1 (SDC2), the low-density lipoprotein receptor (LDLR) and scavenger receptor class B type I (SCARB1). The cholesterol transfer activity of SCARB1 allows E2 exposure and binding of E2 to SCARB1 and the tetraspanin CD81. E1/E2 heterodimer binding on CD81 activates the epithelial growth factor receptor (EGFR) signaling pathway. Diffusion of the complex E1-E2-EGFR-SCARB1-CD81 to the cell lateral membrane allows further interaction with Claudin 1 (CLDN1) and occludin (OCLN) to finally trigger HCV entry. Inhibits host EIF2AK2/PKR activation, preventing the establishment of an antiviral state. Viral ligand for CD209/DC-SIGN and CLEC4M/DC-SIGNR, which are respectively found on dendritic cells (DCs), and on liver sinusoidal endothelial cells and macrophage-like cells of lymph node sinuses. These interactions allow the capture of circulating HCV particles by these cells and subsequent facilitated transmission to permissive cells such as hepatocytes and lymphocyte subpopulations. The interaction between E2 and host amino acid transporter complex formed by SLC3A2 and SLC7A5/LAT1 may facilitate viral entry into host cell. Ion channel protein that acts as a viroporin and plays an essential role in the assembly, envelopment and secretion of viral particles. Regulates the host cell secretory pathway, which induces the intracellular retention of viral glycoproteins and favors assembly of viral particles. Creates a pore in acidic organelles and releases Ca(2+) and H(+) in the cytoplasm of infected cells, leading to a productive viral infection. High levels of cytoplasmic Ca(2+) may trigger membrane trafficking and transport of viral ER-associated proteins to viroplasms, sites of viral genome replication. This ionic imbalance induces the assembly of the inflammasome complex, which triggers the maturation of pro-IL-1beta into IL-1beta through the action of caspase-1. Targets also host mitochondria and induces mitochondrial depolarization. In addition of its role as a viroporin, acts as a lipid raft adhesion factor. In terms of biological role, cysteine protease required for the proteolytic auto-cleavage between the non-structural proteins NS2 and NS3. The N-terminus of NS3 is required for the function of NS2 protease (active region NS2-3). Promotes the initiation of viral particle assembly by mediating the interaction between structural and non-structural proteins. Its function is as follows. Displays three enzymatic activities: serine protease with a chymotrypsin-like fold, NTPase and RNA helicase. NS3 serine protease, in association with NS4A, is responsible for the cleavages of NS3-NS4A, NS4A-NS4B, NS4B-NS5A and NS5A-NS5B. The NS3/NS4A complex prevents phosphorylation of host IRF3, thus preventing the establishment of dsRNA induced antiviral state. The NS3/NS4A complex induces host amino acid transporter component SLC3A2, thus contributing to HCV propagation. NS3 RNA helicase binds to RNA and unwinds both dsDNA and dsRNA in the 3' to 5' direction, and likely resolves RNA complicated stable secondary structures in the template strand. Binds a single ATP and catalyzes the unzipping of a single base pair of dsRNA. Inhibits host antiviral proteins TBK1 and IRF3 thereby preventing the establishment of an antiviral state. Cleaves host MAVS/CARDIF thereby preventing the establishment of an antiviral state. Cleaves host TICAM1/TRIF, thereby disrupting TLR3 signaling and preventing the establishment of an antiviral state. Functionally, peptide cofactor which forms a non-covalent complex with the N-terminal of NS3 serine protease. The NS3/NS4A complex prevents phosphorylation of host IRF3, thus preventing the establishment of dsRNA induced antiviral state. The NS3/NS4A complex induces host amino acid transporter component SLC3A2, thus contributing to HCV propagation. Induces a specific membrane alteration that serves as a scaffold for the virus replication complex. This membrane alteration gives rise to the so-called ER-derived membranous web that contains the replication complex. NS4B self-interaction contributes to its function in membranous web formation. Promotes host TRIF protein degradation in a CASP8-dependent manner thereby inhibiting host TLR3-mediated interferon signaling. Disrupts the interaction between STING and TBK1 contributing to the inhibition of interferon signaling. In terms of biological role, phosphorylated protein that is indispensable for viral replication and assembly. Both hypo- and hyperphosphorylated states are required for the viral life cycle. The hyperphosphorylated form of NS5A is an inhibitor of viral replication. Involved in RNA-binding and especially in binding to the viral genome. Zinc is essential for RNA-binding. Participates in the viral particle production as a result of its interaction with the mature viral core protein. Its interaction with host VAPB may target the viral replication complex to vesicles. Down-regulates viral IRES translation initiation. Mediates interferon resistance, presumably by interacting with and inhibiting host EIF2AK2/PKR. Prevents BIN1-induced apoptosis. Acts as a transcriptional activator of some host genes important for viral replication when localized in the nucleus. Via the interaction with host PACSIN2, modulates lipid droplet formation in order to promote virion assembly. Modulates TNFRSF21/DR6 signaling pathway for viral propagation. Its function is as follows. RNA-dependent RNA polymerase that performs primer-template recognition and RNA synthesis during viral replication. Initiates RNA transcription/replication at a flavin adenine dinucleotide (FAD), resulting in a 5'- FAD cap on viral RNAs. In this way, recognition of viral 5' RNA by host pattern recognition receptors can be bypassed, thereby evading activation of antiviral pathways. The sequence is that of Genome polyprotein from Hepatitis C virus genotype 6d (isolate VN235) (HCV).